The primary structure comprises 183 residues: GMP synthase [glutamine-hydrolyzing] subunit A (183 aa).

One can recognise a Glutamine amidotransferase type-1 domain in the interval 3-183; that stretch reads HILVVDNHGQ…VFENFVAICE (181 aa). The Nucleophile role is filled by Cys-74. Active-site residues include His-162 and Glu-164.

Heterodimer composed of a glutamine amidotransferase subunit (A) and a GMP-binding subunit (B).

The enzyme catalyses XMP + L-glutamine + ATP + H2O = GMP + L-glutamate + AMP + diphosphate + 2 H(+). Its pathway is purine metabolism; GMP biosynthesis; GMP from XMP (L-Gln route): step 1/1. Functionally, catalyzes the synthesis of GMP from XMP. In Halobacterium salinarum (strain ATCC 700922 / JCM 11081 / NRC-1) (Halobacterium halobium), this protein is GMP synthase [glutamine-hydrolyzing] subunit A.